Reading from the N-terminus, the 133-residue chain is ATP synthase epsilon chain (133 aa).

Belongs to the ATPase epsilon chain family. In terms of assembly, F-type ATPases have 2 components, CF(1) - the catalytic core - and CF(0) - the membrane proton channel. CF(1) has five subunits: alpha(3), beta(3), gamma(1), delta(1), epsilon(1). CF(0) has three main subunits: a, b and c.

It is found in the cell membrane. Its function is as follows. Produces ATP from ADP in the presence of a proton gradient across the membrane. This Bacillus anthracis (strain A0248) protein is ATP synthase epsilon chain.